Here is a 347-residue protein sequence, read N- to C-terminus: Phenylalanine--tRNA ligase alpha subunit (347 aa).

A Mg(2+)-binding site is contributed by E265.

This sequence belongs to the class-II aminoacyl-tRNA synthetase family. Phe-tRNA synthetase alpha subunit type 1 subfamily. In terms of assembly, tetramer of two alpha and two beta subunits. Requires Mg(2+) as cofactor.

Its subcellular location is the cytoplasm. The enzyme catalyses tRNA(Phe) + L-phenylalanine + ATP = L-phenylalanyl-tRNA(Phe) + AMP + diphosphate + H(+). The polypeptide is Phenylalanine--tRNA ligase alpha subunit (Mycolicibacterium paratuberculosis (strain ATCC BAA-968 / K-10) (Mycobacterium paratuberculosis)).